Consider the following 231-residue polypeptide: Orotate phosphoribosyltransferase (231 aa).

Residues K27, 79-80 (YK), R106, K107, K110, H112, and 133-141 (DDVMTAGTA) each bind 5-phospho-alpha-D-ribose 1-diphosphate. Orotate is bound by residues T137 and R166.

Belongs to the purine/pyrimidine phosphoribosyltransferase family. PyrE subfamily. Homodimer. Requires Mg(2+) as cofactor.

It carries out the reaction orotidine 5'-phosphate + diphosphate = orotate + 5-phospho-alpha-D-ribose 1-diphosphate. Its pathway is pyrimidine metabolism; UMP biosynthesis via de novo pathway; UMP from orotate: step 1/2. In terms of biological role, catalyzes the transfer of a ribosyl phosphate group from 5-phosphoribose 1-diphosphate to orotate, leading to the formation of orotidine monophosphate (OMP). The sequence is that of Orotate phosphoribosyltransferase from Bifidobacterium adolescentis (strain ATCC 15703 / DSM 20083 / NCTC 11814 / E194a).